A 408-amino-acid polypeptide reads, in one-letter code: 4-O-methyl-glucuronoyl methylesterase 1 (408 aa).

The N-terminal stretch at 1 to 19 (MASSSRFAALLLLALPALA) is a signal peptide. 3 disulfide bridges follow: C31/C65, C218/C354, and C250/C326. The GXSYXG catalytic site motif signature appears at 217–222 (GCSRDG). The active-site Nucleophile is the S219. Substrate contacts are provided by K223, Q265, and E273. N-linked (GlcNAc...) asparagine glycosylation occurs at N287. W317 provides a ligand contact to substrate. N-linked (GlcNAc...) asparagine glycosylation occurs at N350. H353 (proton donor/acceptor) is an active-site residue. N390, N395, and N401 each carry an N-linked (GlcNAc...) asparagine glycan.

Belongs to the carbohydrate esterase 15 (CE15) family.

It is found in the secreted. The enzyme catalyses a 4-O-methyl-alpha-D-glucuronosyl ester derivative + H2O = 4-O-methyl-alpha-D-glucuronate derivative + an alcohol + H(+). Its function is as follows. Glucuronoyl esterase which may play a significant role in biomass degradation, as it is considered to disconnect hemicellulose from lignin through the hydrolysis of the ester bond between 4-O-methyl-D-glucuronic acid residues of glucuronoxylans and aromatic alcohols of lignin. Can hydrolyze benzyl glucuronic acid (BnGlcA), allyl glucuronic acid (allylGlcA) and to a lower degree methyl glucuronic acid (MeGlcA) in vitro. The protein is 4-O-methyl-glucuronoyl methylesterase 1 of Wolfiporia cocos (strain MD-104) (Brown rot fungus).